Consider the following 714-residue polypeptide: MKSILKKAKHFFHTNETVNGENGGEKTAKESESQQHHQQQQQHDENGANPPDQGVDEASNVSQSQPTTSALQTSTSLQPSSSLHQIPQSQSSLELTTNPTQQLPTTPTKQLPTPPPPQQPHSQQQQQQQQQSQSQLNNNDISISTNTNNTTNNTNNNNNIDSTLTTPVPSSENLATLSTSTTSEQQPNSQPTPNNTNTTTSPPPSSASTSNLSTSTTTTTTTTTTTTAAANENTNTTQEQTVSPNKPPQPPNALSQSTTSSSTSSTSLLSSTFSKFKIKLGSGSTKNKDSSSAPGTPHINNNNNTVSSSNKNRSTLVITPGSVNNNNNNQNNHKNNNTTPDHPPEEQKPVEKEVITIATLADFPEDCQKLIRISGIPEEKLIKNIQILAYVLHFRTGRFFKLVDEPPREPRKKFVSERFNDGEKLLEPVEPALLKKMYKDSDQVGKGGFGTVYFAKSTKEKRLVAIKKMPHVTKRQQQQNFREAAILAKCDHPNIVKLHTCHIDKDSNLWIVMEFMEGGTFEEAAKAWKFNENNLAYVAKELLKGLQYLHENHMVHRDLKSANIMMSVEGKVKLIDFGLCEDVATSTPMHMVGSPFWMAPEMIQQKYHSTPVDIWSFAISLLEMANQRPPMMESAVKAMFTVATDGATGFDDPALWSDCFKDFLSLCLKQDPAERATAEELLKHPFIKKADSRDNMENILKKIFLTNSLMNSGF.

Over residues 1–12 the composition is skewed to basic residues; the sequence is MKSILKKAKHFF. Disordered stretches follow at residues 1-267 and 281-349; these read MKSI…SSTS and GSGS…EQKP. The segment covering 23–35 has biased composition (basic and acidic residues); the sequence is GGEKTAKESESQQ. Positions 62-83 are enriched in low complexity; the sequence is SQSQPTTSALQTSTSLQPSSSL. Over residues 84–94 the composition is skewed to polar residues; the sequence is HQIPQSQSSLE. Composition is skewed to low complexity over residues 95-111 and 120-166; these read LTTN…TKQL and PHSQ…TLTT. The segment covering 167–177 has biased composition (polar residues); sequence PVPSSENLATL. 2 stretches are compositionally biased toward low complexity: residues 178-241 and 254-267; these read STST…QEQT and LSQS…SSTS. Residues 282 to 294 are compositionally biased toward polar residues; the sequence is SGSTKNKDSSSAP. Low complexity-rich tracts occupy residues 300-314 and 324-337; these read NNNN…KNRS and NNNN…KNNN. A Protein kinase domain is found at 438–687; the sequence is YKDSDQVGKG…AEELLKHPFI (250 aa). ATP is bound by residues 444–452 and lysine 467; that span reads VGKGGFGTV. Catalysis depends on aspartate 558, which acts as the Proton acceptor.

It belongs to the protein kinase superfamily. STE Ser/Thr protein kinase family. STE20 subfamily. Requires Mg(2+) as cofactor. Expressed at equal levels in prestalk and prespore cells.

It carries out the reaction L-seryl-[protein] + ATP = O-phospho-L-seryl-[protein] + ADP + H(+). It catalyses the reaction L-threonyl-[protein] + ATP = O-phospho-L-threonyl-[protein] + ADP + H(+). The chain is Probable serine/threonine-protein kinase mkcB from Dictyostelium discoideum (Social amoeba).